The primary structure comprises 351 residues: Nicotinate-nucleotide--dimethylbenzimidazole phosphoribosyltransferase (351 aa).

Glu-319 serves as the catalytic Proton acceptor.

It belongs to the CobT family.

It carries out the reaction 5,6-dimethylbenzimidazole + nicotinate beta-D-ribonucleotide = alpha-ribazole 5'-phosphate + nicotinate + H(+). The protein operates within nucleoside biosynthesis; alpha-ribazole biosynthesis; alpha-ribazole from 5,6-dimethylbenzimidazole: step 1/2. In terms of biological role, catalyzes the synthesis of alpha-ribazole-5'-phosphate from nicotinate mononucleotide (NAMN) and 5,6-dimethylbenzimidazole (DMB). This is Nicotinate-nucleotide--dimethylbenzimidazole phosphoribosyltransferase from Desulforamulus reducens (strain ATCC BAA-1160 / DSM 100696 / MI-1) (Desulfotomaculum reducens).